Consider the following 192-residue polypeptide: Peptidyl-tRNA hydrolase (192 aa).

Position 14 (Y14) interacts with tRNA. H19 acts as the Proton acceptor in catalysis. Residues Y64, N66, and N112 each coordinate tRNA.

This sequence belongs to the PTH family. Monomer.

It localises to the cytoplasm. The catalysed reaction is an N-acyl-L-alpha-aminoacyl-tRNA + H2O = an N-acyl-L-amino acid + a tRNA + H(+). In terms of biological role, hydrolyzes ribosome-free peptidyl-tRNAs (with 1 or more amino acids incorporated), which drop off the ribosome during protein synthesis, or as a result of ribosome stalling. Its function is as follows. Catalyzes the release of premature peptidyl moieties from peptidyl-tRNA molecules trapped in stalled 50S ribosomal subunits, and thus maintains levels of free tRNAs and 50S ribosomes. This chain is Peptidyl-tRNA hydrolase, found in Anaeromyxobacter sp. (strain K).